Consider the following 185-residue polypeptide: Elongation factor P (185 aa).

The protein belongs to the elongation factor P family.

Its subcellular location is the cytoplasm. Its pathway is protein biosynthesis; polypeptide chain elongation. Involved in peptide bond synthesis. Stimulates efficient translation and peptide-bond synthesis on native or reconstituted 70S ribosomes in vitro. Probably functions indirectly by altering the affinity of the ribosome for aminoacyl-tRNA, thus increasing their reactivity as acceptors for peptidyl transferase. The protein is Elongation factor P of Alkaliphilus oremlandii (strain OhILAs) (Clostridium oremlandii (strain OhILAs)).